The sequence spans 129 residues: MKKLQIAVGIIRNENNEIFITRRAADAHMANKLEFPGGKIEMGETPEQAVVRELQEEVGITPQHFSLFEKLEYEFPDRHITLWFWLVERWEGEPWGKEGQPGEWMSLVGLNADDFPPANEPVIAKLKRL.

One can recognise a Nudix hydrolase domain in the interval 1–129 (MKKLQIAVGI…EPVIAKLKRL (129 aa)). Residues R23, H28, and 34-37 (EFPG) contribute to the 8-oxo-dGTP site. Mg(2+) contacts are provided by G37 and E57. The short motif at 38–59 (GKIEMGETPEQAVVRELQEEVG) is the Nudix box element. N119 lines the 8-oxo-dGTP pocket.

It belongs to the Nudix hydrolase family. Monomer. Mg(2+) is required as a cofactor.

The enzyme catalyses 8-oxo-dGTP + H2O = 8-oxo-dGMP + diphosphate + H(+). It catalyses the reaction 8-oxo-GTP + H2O = 8-oxo-GMP + diphosphate + H(+). The catalysed reaction is 8-oxo-dGDP + H2O = 8-oxo-dGMP + phosphate + H(+). It carries out the reaction 8-oxo-GDP + H2O = 8-oxo-GMP + phosphate + H(+). Its function is as follows. Specifically hydrolyzes both 8-oxo-deoxyguanosine triphosphate (8-oxo-dGTP) and 8-oxo-guanosine triphosphate (8-oxo-GTP) to the related monophosphates, thereby cleaning up the nucleotide pools and preventing misincorporation of 8-oxoGua into DNA and RNA. It prevents replicational errors by removing an oxidatively damaged form of guanine (8-oxo-dGTP) from DNA and the nucleotide pool. 8-oxo-dGTP can be inserted opposite dA and dC residues of template DNA with almost equal efficiency thus leading to A.T to G.C transversions. MutT may also ensure transcriptional fidelity, removing 8-oxo-GTP from the ribonucleotide triphosphate pool. However, due to the lower efficiency of RNA polymerase 8-oxo-GTP incorporation, MutT is probably not a major contributor to transcriptional fidelity. It also hydrolyzes 8-oxo-dGDP and 8-oxo-GDP to their monophosphate form. In vitro, can also use dGTP, dGDP and other various nucleoside di- and triphosphates, with much lower efficiency. Works cooperatively with MutM and MutY to prevent accumulation in the DNA of oxidized guanine residues. The sequence is that of 8-oxo-dGTP diphosphatase from Escherichia coli (strain K12).